The chain runs to 685 residues: Methionine--tRNA ligase (685 aa).

Residues 12-22 (PYANGSIHLGH) carry the 'HIGH' region motif. Cys143, Cys146, Cys156, and Cys159 together coordinate Zn(2+). The 'KMSKS' region signature appears at 339 to 343 (KMSKS). ATP is bound at residue Lys342. Residues 582-685 (DFMKIDMRVA…AGAQPGDKVG (104 aa)) form the tRNA-binding domain.

The protein belongs to the class-I aminoacyl-tRNA synthetase family. MetG type 1 subfamily. Homodimer. The cofactor is Zn(2+).

It localises to the cytoplasm. It catalyses the reaction tRNA(Met) + L-methionine + ATP = L-methionyl-tRNA(Met) + AMP + diphosphate. Functionally, is required not only for elongation of protein synthesis but also for the initiation of all mRNA translation through initiator tRNA(fMet) aminoacylation. This Neisseria meningitidis serogroup C (strain 053442) protein is Methionine--tRNA ligase.